We begin with the raw amino-acid sequence, 314 residues long: Glutathione synthetase (314 aa).

Residues 125 to 311 (EKLAAQLFPQ…IAGQLFDAIE (187 aa)) form the ATP-grasp domain. 151 to 208 (FVQKQEQAILKPLDGMGGHSIFRSSNGDPNLNVILETLTDGGRTLAIAQRYLQQIIEG) is a binding site for ATP. Residues Glu-282 and Asn-284 each coordinate Mg(2+).

The protein belongs to the prokaryotic GSH synthase family. The cofactor is Mg(2+). It depends on Mn(2+) as a cofactor.

The enzyme catalyses gamma-L-glutamyl-L-cysteine + glycine + ATP = glutathione + ADP + phosphate + H(+). It participates in sulfur metabolism; glutathione biosynthesis; glutathione from L-cysteine and L-glutamate: step 2/2. In Xylella fastidiosa (strain 9a5c), this protein is Glutathione synthetase.